A 395-amino-acid polypeptide reads, in one-letter code: S-adenosylmethionine synthase (395 aa).

H16 serves as a coordination point for ATP. D18 contributes to the Mg(2+) binding site. Residue E44 participates in K(+) binding. L-methionine is bound by residues E57 and Q100. The interval 100 to 110 is flexible loop; it reads QSPDIAQGVDR. Residues 167–169, 233–234, D242, 248–249, A265, and K269 each bind ATP; these read DAK, RF, and RK. L-methionine is bound at residue D242. An L-methionine-binding site is contributed by K273.

It belongs to the AdoMet synthase family. As to quaternary structure, homotetramer; dimer of dimers. Requires Mg(2+) as cofactor. K(+) is required as a cofactor.

It localises to the cytoplasm. The catalysed reaction is L-methionine + ATP + H2O = S-adenosyl-L-methionine + phosphate + diphosphate. Its pathway is amino-acid biosynthesis; S-adenosyl-L-methionine biosynthesis; S-adenosyl-L-methionine from L-methionine: step 1/1. Its function is as follows. Catalyzes the formation of S-adenosylmethionine (AdoMet) from methionine and ATP. The overall synthetic reaction is composed of two sequential steps, AdoMet formation and the subsequent tripolyphosphate hydrolysis which occurs prior to release of AdoMet from the enzyme. This chain is S-adenosylmethionine synthase, found in Burkholderia cenocepacia (strain HI2424).